A 732-amino-acid chain; its full sequence is Elongation factor 2 (732 aa).

One can recognise a tr-type G domain in the interval 19 to 260 (ERIRNIDIAA…MVIKNLPNPR (242 aa)). GTP contacts are provided by residues 28–35 (AHIDHGKT), 94–98 (DTPGH), and 148–151 (NKVD). His598 carries the post-translational modification Diphthamide.

The protein belongs to the TRAFAC class translation factor GTPase superfamily. Classic translation factor GTPase family. EF-G/EF-2 subfamily.

The protein resides in the cytoplasm. Its function is as follows. Catalyzes the GTP-dependent ribosomal translocation step during translation elongation. During this step, the ribosome changes from the pre-translocational (PRE) to the post-translocational (POST) state as the newly formed A-site-bound peptidyl-tRNA and P-site-bound deacylated tRNA move to the P and E sites, respectively. Catalyzes the coordinated movement of the two tRNA molecules, the mRNA and conformational changes in the ribosome. The chain is Elongation factor 2 from Picrophilus torridus (strain ATCC 700027 / DSM 9790 / JCM 10055 / NBRC 100828 / KAW 2/3).